Here is a 234-residue protein sequence, read N- to C-terminus: Proteasome subunit alpha type-2 (234 aa).

Position 2 is an N-acetylalanine (A2). At Y121 the chain carries Phosphotyrosine.

Belongs to the peptidase T1A family. The 26S proteasome consists of a 20S proteasome core and two 19S regulatory subunits. The 20S proteasome core is a barrel-shaped complex made of 28 subunits that are arranged in four stacked rings. The two outer rings are each formed by seven alpha subunits, and the two inner rings are formed by seven beta subunits. The proteolytic activity is exerted by three beta-subunits PSMB5, PSMB6 and PSMB7.

The protein localises to the cytoplasm. Its subcellular location is the nucleus. In terms of biological role, component of the 20S core proteasome complex involved in the proteolytic degradation of most intracellular proteins. This complex plays numerous essential roles within the cell by associating with different regulatory particles. Associated with two 19S regulatory particles, forms the 26S proteasome and thus participates in the ATP-dependent degradation of ubiquitinated proteins. The 26S proteasome plays a key role in the maintenance of protein homeostasis by removing misfolded or damaged proteins that could impair cellular functions, and by removing proteins whose functions are no longer required. Associated with the PA200 or PA28, the 20S proteasome mediates ubiquitin-independent protein degradation. This type of proteolysis is required in several pathways including spermatogenesis (20S-PA200 complex) or generation of a subset of MHC class I-presented antigenic peptides (20S-PA28 complex). The chain is Proteasome subunit alpha type-2 (psma2) from Xenopus laevis (African clawed frog).